The following is a 75-amino-acid chain: Tautomerase PptA (75 aa).

Pro-2 serves as the catalytic Proton acceptor; via imino nitrogen.

Belongs to the 4-oxalocrotonate tautomerase family. PptA subfamily. In terms of assembly, homodimer.

The protein localises to the cytoplasm. The polypeptide is Tautomerase PptA (Klebsiella pneumoniae subsp. pneumoniae (strain ATCC 700721 / MGH 78578)).